A 604-amino-acid polypeptide reads, in one-letter code: Sulfite reductase [NADPH] flavoprotein alpha-component (604 aa).

The region spanning 66–204 is the Flavodoxin-like domain; that stretch reads VTVLSASQTG…AADGWTGRIV (139 aa). Residues 72-77, 119-122, and 155-164 each bind FMN; these read SQTGNA, STQG, and LGDSSYPNFC. The interval 212-231 is disordered; it reads AKNRATPAPQTTPPAGLQTA. Over residues 216–231 the composition is skewed to low complexity; the sequence is ATPAPQTTPPAGLQTA. The FAD-binding FR-type domain maps to 239-453; it reads ADPFPAALLA…VERNDGFRLP (215 aa). FAD-binding positions include threonine 327, glutamine 361, 391 to 394, 409 to 411, and 424 to 427; these read RLYS, TVG, and GGAS. Residues 524-525, 530-534, and aspartate 566 each bind NADP(+); these read SR and KIYVQ. Tyrosine 604 serves as a coordination point for FAD.

The protein belongs to the NADPH-dependent sulphite reductase flavoprotein subunit CysJ family. In the N-terminal section; belongs to the flavodoxin family. It in the C-terminal section; belongs to the flavoprotein pyridine nucleotide cytochrome reductase family. Alpha(8)-beta(8). The alpha component is a flavoprotein, the beta component is a hemoprotein. FAD is required as a cofactor. The cofactor is FMN.

The catalysed reaction is hydrogen sulfide + 3 NADP(+) + 3 H2O = sulfite + 3 NADPH + 4 H(+). The protein operates within sulfur metabolism; hydrogen sulfide biosynthesis; hydrogen sulfide from sulfite (NADPH route): step 1/1. Its function is as follows. Component of the sulfite reductase complex that catalyzes the 6-electron reduction of sulfite to sulfide. This is one of several activities required for the biosynthesis of L-cysteine from sulfate. The flavoprotein component catalyzes the electron flow from NADPH -&gt; FAD -&gt; FMN to the hemoprotein component. The sequence is that of Sulfite reductase [NADPH] flavoprotein alpha-component from Neisseria meningitidis serogroup C / serotype 2a (strain ATCC 700532 / DSM 15464 / FAM18).